Consider the following 218-residue polypeptide: Cytochrome b6 (218 aa).

A helical transmembrane segment spans residues 35–55; sequence IFYCLGGITLVCFLIQFATGF. Cys-38 contributes to the heme c binding site. Heme b is bound by residues His-89 and His-103. Transmembrane regions (helical) follow at residues 93-113, 119-139, and 189-209; these read ASMM…TGGF, LTWV…VTGY, and LHTF…FLMI. Heme b-binding residues include His-190 and His-205.

Belongs to the cytochrome b family. PetB subfamily. In terms of assembly, the 4 large subunits of the cytochrome b6-f complex are cytochrome b6, subunit IV (17 kDa polypeptide, PetD), cytochrome f and the Rieske protein, while the 4 small subunits are PetG, PetL, PetM and PetN. The complex functions as a dimer. Requires heme b as cofactor. It depends on heme c as a cofactor.

The protein resides in the cellular thylakoid membrane. Functionally, component of the cytochrome b6-f complex, which mediates electron transfer between photosystem II (PSII) and photosystem I (PSI), cyclic electron flow around PSI, and state transitions. This is Cytochrome b6 from Synechococcus sp. (strain WH7803).